Here is a 145-residue protein sequence, read N- to C-terminus: D-aminoacyl-tRNA deacylase (145 aa).

The Gly-cisPro motif, important for rejection of L-amino acids signature appears at 137 to 138; the sequence is GP.

This sequence belongs to the DTD family. Homodimer.

The protein resides in the cytoplasm. It catalyses the reaction glycyl-tRNA(Ala) + H2O = tRNA(Ala) + glycine + H(+). The enzyme catalyses a D-aminoacyl-tRNA + H2O = a tRNA + a D-alpha-amino acid + H(+). In terms of biological role, an aminoacyl-tRNA editing enzyme that deacylates mischarged D-aminoacyl-tRNAs. Also deacylates mischarged glycyl-tRNA(Ala), protecting cells against glycine mischarging by AlaRS. Acts via tRNA-based rather than protein-based catalysis; rejects L-amino acids rather than detecting D-amino acids in the active site. By recycling D-aminoacyl-tRNA to D-amino acids and free tRNA molecules, this enzyme counteracts the toxicity associated with the formation of D-aminoacyl-tRNA entities in vivo and helps enforce protein L-homochirality. This Pseudomonas putida (strain ATCC 700007 / DSM 6899 / JCM 31910 / BCRC 17059 / LMG 24140 / F1) protein is D-aminoacyl-tRNA deacylase.